Here is an 88-residue protein sequence, read N- to C-terminus: Small ribosomal subunit protein bS16 (88 aa).

It belongs to the bacterial ribosomal protein bS16 family.

The sequence is that of Small ribosomal subunit protein bS16 from Anaeromyxobacter sp. (strain Fw109-5).